The chain runs to 112 residues: UPF0342 protein STER_0693 (112 aa).

This sequence belongs to the UPF0342 family.

The chain is UPF0342 protein STER_0693 from Streptococcus thermophilus (strain ATCC BAA-491 / LMD-9).